The sequence spans 337 residues: D-alanine--D-alanine ligase (337 aa).

An ATP-grasp domain is found at 126-326; it reads KQIWISNGLS…YADLVLWLLS (201 aa). Position 152 to 207 (152 to 207) interacts with ATP; it reads VKHLGLPLIVKPAHEGSSLGLTKVKSVEELPAAYQLAAGLDKKVIAETCIVGDELT. Aspartate 279, glutamate 293, and asparagine 295 together coordinate Mg(2+).

It belongs to the D-alanine--D-alanine ligase family. The cofactor is Mg(2+). Mn(2+) serves as cofactor.

The protein localises to the cytoplasm. The enzyme catalyses 2 D-alanine + ATP = D-alanyl-D-alanine + ADP + phosphate + H(+). It functions in the pathway cell wall biogenesis; peptidoglycan biosynthesis. Cell wall formation. The sequence is that of D-alanine--D-alanine ligase from Polynucleobacter asymbioticus (strain DSM 18221 / CIP 109841 / QLW-P1DMWA-1) (Polynucleobacter necessarius subsp. asymbioticus).